A 466-amino-acid chain; its full sequence is Zinc finger protein NUTCRACKER (466 aa).

Polar residues predominate over residues 1–23 (MTSEVLQTISSGSGFAQPQSSST). The segment at 1-29 (MTSEVLQTISSGSGFAQPQSSSTLDHDES) is disordered. Phosphoserine is present on Ser-56. Residues 66-88 (FLCEVCGKGFQRDQNLQLHRRGH) form a C2H2-type 1 zinc finger. Thr-98 is modified (phosphothreonine; by KIN10). The C2H2-type 2 zinc finger occupies 107 to 137 (YVCPEKTCVHHHSSRALGDLTGIKKHFCRKH). Positions 134-141 (CRKHGEKK) match the Nuclear localization signal motif. The C2H2-type 2; degenerate zinc finger occupies 142–165 (WTCEKCAKRYAVQSDWKAHSKTCG). Residues Cys-144, Cys-147, His-160, Cys-164, Cys-171, and Cys-173 each contribute to the Zn(2+) site. The segment at 169 to 192 (YRCDCGTIFSRRDSFITHRAFCDA) adopts a CCHC-type 2; atypical zinc-finger fold. Phosphoserine; by KIN10 is present on residues Ser-178 and Ser-182. The tract at residues 179–191 (RRDSFITHRAFCD) is SHR-binding. Residues His-186 and Cys-190 each contribute to the Zn(2+) site.

Interacts with AKIN10. Inhibition of transcription factor activity by KIN10-mediated phosphorylation at Thr-98, Ser-178 and Ser-182 under sugar deprivation conditions, thus delaying flowering. As to expression, highly expressed in vegetative organs and at lower levels in flowers and siliques. Expressed predominantly in roots. In roots, present in cortex, endodermis, and pericycle layer.

Its subcellular location is the nucleus. Functionally, transcription activator that binds to the DNA sequence 5'-CTTTTGTCC-3'. Regulates photoperiodic flowering by modulating sugar transport and metabolism. Regulates SUS1 and SUS4. Transcription factor that regulates tissue boundaries and asymmetric cell division. Contributes to the sequestration of 'SHORT-ROOT' to the nucleus. The chain is Zinc finger protein NUTCRACKER from Arabidopsis thaliana (Mouse-ear cress).